Reading from the N-terminus, the 241-residue chain is Histone H1-II (241 aa).

The span at 1 to 10 (MASDAPEVKA) shows a compositional bias: basic and acidic residues. Disordered stretches follow at residues 1–27 (MASDAPEVKAPKAKTQKKPKTAPTHPP) and 89–241 (NSYK…AKKA). Residues 11 to 20 (PKAKTQKKPK) show a composition bias toward basic residues. Positions 24 to 95 (THPPYIQMVT…KVKNSYKLSD (72 aa)) constitute an H15 domain. The segment covering 99–111 (SKAKAAAKPKAAP) has biased composition (basic residues). 3 tandem repeats follow at residues 111-116 (PKKAAA), 117-122 (PKKAAA), and 123-128 (PKKAKA). The tract at residues 111 to 217 (PKKAAAPKKA…KAATPKKAKA (107 aa)) is 8 X 6 AA repeats of P-K-K-A-[AK]-A. A compositionally biased stretch (basic and acidic residues) spans 129-155 (PKKEGEKKAVKPKSEKKAAKPKTEKKP). Composition is skewed to basic residues over residues 156 to 184 (KAAKKPKAAKKPAAKKPAAKKPAAKKATP) and 194 to 241 (AAPK…AKKA). Residues 183-186 (TPKK) mediate DNA binding. Repeat copies occupy residues 184 to 189 (PKKAAA), 190 to 195 (PKKAAA), 196 to 201 (PKKAKA), 204 to 209 (PKKAKA), and 212 to 217 (PKKAKA). 2 consecutive DNA-binding regions follow at residues 203–206 (TPKK) and 211–214 (TPKK).

The protein belongs to the histone H1/H5 family.

Its subcellular location is the nucleus. It is found in the chromosome. In terms of biological role, histones H1 are necessary for the condensation of nucleosome chains into higher-order structures. The polypeptide is Histone H1-II (H1-II) (Volvox carteri (Green alga)).